The primary structure comprises 872 residues: Chaperone protein ClpB 2 (872 aa).

The Clp R domain occupies 6-148 (PNQFTEKAWE…KNIIKQVRGS (143 aa)). Repeat stretches follow at residues 9 to 73 (FTEK…IQRQ) and 85 to 148 (LGRS…VRGS). An NBD1 region spans residues 161 to 342 (QSLEKYGRDL…RRFQQVYVDQ (182 aa)). Position 208 to 215 (208 to 215 (GEPGVGKT)) interacts with ATP. The linker stretch occupies residues 343 to 551 (PSVEDTISIL…IAEIISKWTG (209 aa)). Residues 393–527 (IDLVDEAAAR…TERELSQTQG (135 aa)) are a coiled coil. The tract at residues 561–772 (EKEKLLHLED…RIDEVIIFHS (212 aa)) is NBD2. 611 to 618 (GPTGVGKT) contributes to the ATP binding site. Residues 773 to 872 (LDKKELRQIV…SRLPVEVFSS (100 aa)) are C-terminal.

This sequence belongs to the ClpA/ClpB family. Homohexamer. The oligomerization is ATP-dependent.

It is found in the cytoplasm. Its function is as follows. Part of a stress-induced multi-chaperone system, it is involved in the recovery of the cell from heat-induced damage, in cooperation with DnaK, DnaJ and GrpE. Acts before DnaK, in the processing of protein aggregates. Protein binding stimulates the ATPase activity; ATP hydrolysis unfolds the denatured protein aggregates, which probably helps expose new hydrophobic binding sites on the surface of ClpB-bound aggregates, contributing to the solubilization and refolding of denatured protein aggregates by DnaK. The chain is Chaperone protein ClpB 2 (clpB2) from Nostoc sp. (strain PCC 7120 / SAG 25.82 / UTEX 2576).